We begin with the raw amino-acid sequence, 181 residues long: Protein csk22 (181 aa).

Helical transmembrane passes span 5–22, 35–57, 61–78, 91–113, and 140–162; these read LQSV…YKKI, WLFT…SAIH, YGYL…VFFA, IYFR…RFLY, and LTIG…IIKL.

It is found in the cell membrane. This Bacillus subtilis (strain 168) protein is Protein csk22 (csk22).